The primary structure comprises 685 residues: Exocyst complex component 8 (685 aa).

One can recognise a PH domain in the interval 151-251 (YLVYNGDLTE…WLEILEQTKK (101 aa)). Positions 254–263 (ALNEKQKQEE) are enriched in basic and acidic residues. A disordered region spans residues 254-273 (ALNEKQKQEETTPQLPVVPE).

The protein belongs to the EXO84 family. As to quaternary structure, the exocyst complex is composed of exoc1, exoc2, exoc3, exoc4, exoc5, exoc6, exoc7 and exoc8.

It localises to the cytoplasm. Its subcellular location is the perinuclear region. The protein resides in the cell projection. It is found in the growth cone. In terms of biological role, component of the exocyst complex involved in the docking of exocytic vesicles with fusion sites on the plasma membrane. This is Exocyst complex component 8 (exoc8) from Xenopus laevis (African clawed frog).